Consider the following 37-residue polypeptide: Cytochrome b6-f complex subunit 7 (37 aa).

Residues 11–29 (AVILMVLVLFGLAWGFLIL) traverse the membrane as a helical segment.

Belongs to the PetM family. In terms of assembly, the 4 large subunits of the cytochrome b6-f complex are cytochrome b6, subunit IV (17 kDa polypeptide, PetD), cytochrome f and the Rieske protein, while the 4 small subunits are PetG, PetL, PetM and PetN. The complex functions as a dimer.

The protein localises to the cellular thylakoid membrane. In terms of biological role, component of the cytochrome b6-f complex, which mediates electron transfer between photosystem II (PSII) and photosystem I (PSI), cyclic electron flow around PSI, and state transitions. In Crocosphaera subtropica (strain ATCC 51142 / BH68) (Cyanothece sp. (strain ATCC 51142)), this protein is Cytochrome b6-f complex subunit 7.